We begin with the raw amino-acid sequence, 404 residues long: Cytoplasmic 60S subunit biogenesis factor REI1 homolog 1 (404 aa).

2 C2H2-type zinc fingers span residues 4-28 and 68-92; these read LTCNACNMEFKDEEERNLHYKSDWH and YTCAICAKGYRSSKAHEQHLQSRSH. The tract at residues 119–169 is disordered; the sequence is QHRGSIDDDSEDEWVEVDSDEELAAEEASDSLSKLNVNESGSAEDMDDDGD. 2 stretches are compositionally biased toward acidic residues: residues 125–147 and 160–169; these read DDDSEDEWVEVDSDEELAAEEAS and SAEDMDDDGD. C2H2-type zinc fingers lie at residues 178–201 and 229–256; these read TCCLMCDKKHKTLESCMLHMHKHH and FMCLYCNELCRPFSSLEAVRKHMEAKSH.

This sequence belongs to the REI1 family. Can form homodimer. Interacts with RLP24, RPL24A, RPL24B, EBP1 and JJJ1.

Its subcellular location is the cytoplasm. Functionally, pre-60S-associated factor involved in the cytoplasmic maturation of the 60S subunit. Involved in the dissociation and recycling of other late pre-60S factors before newly synthesized large ribosomal subunits enter translation. Can complement the growth defect of a yeast mutant lacking REI1. Required for leaf growth under cold temperature conditions. This is Cytoplasmic 60S subunit biogenesis factor REI1 homolog 1 from Arabidopsis thaliana (Mouse-ear cress).